Reading from the N-terminus, the 274-residue chain is DNA damage-inducible protein D (274 aa).

This chain is DNA damage-inducible protein D (dinD), found in Escherichia coli (strain K12).